A 120-amino-acid chain; its full sequence is Putative cysteine proteinase inhibitor 11 (120 aa).

Positions 1–24 (MARHPGLLLILLAAVAAVATTSRA) are cleaved as a signal peptide. The Secondary area of contact signature appears at 73-77 (QVVQG).

It belongs to the cystatin family. Phytocystatin subfamily.

The protein resides in the secreted. Functionally, specific inhibitor of cysteine proteinases. Probably involved in the regulation of endogenous processes and in defense against pests and pathogens. This is Putative cysteine proteinase inhibitor 11 from Oryza sativa subsp. japonica (Rice).